Reading from the N-terminus, the 208-residue chain is Ribosome maturation factor RimM (208 aa).

The 108-residue stretch at 98 to 205 (ADEFYVPDLI…IIEITPPDGL (108 aa)) folds into the PRC barrel domain. The interval 154 to 174 (LPSKSKRSRDTKNQKKNQSPP) is disordered.

Belongs to the RimM family. In terms of assembly, binds ribosomal protein uS19.

The protein localises to the cytoplasm. Its function is as follows. An accessory protein needed during the final step in the assembly of 30S ribosomal subunit, possibly for assembly of the head region. Essential for efficient processing of 16S rRNA. May be needed both before and after RbfA during the maturation of 16S rRNA. It has affinity for free ribosomal 30S subunits but not for 70S ribosomes. In Trichodesmium erythraeum (strain IMS101), this protein is Ribosome maturation factor RimM.